The chain runs to 85 residues: Toxin BmKAEP (85 aa).

The N-terminal stretch at 1–21 is a signal peptide; that stretch reads MKLFLLLVISASMLIDGLVNA. Positions 22 to 82 constitute an LCN-type CS-alpha/beta domain; that stretch reads DGYIRGSNGC…TWKSESNTCG (61 aa). Disulfide bonds link Cys-31–Cys-81, Cys-35–Cys-56, Cys-42–Cys-63, and Cys-46–Cys-65. Gly-82 bears the Glycine amide mark.

As to expression, expressed by the venom gland.

Its subcellular location is the secreted. Its function is as follows. Shows anti-epileptic activity. Shares high homology with depressant insect toxins, but shows very weak toxicity against mammals and insects and no obvious symptoms on insect larvae. May target voltage-gated sodium channel (Nav). The chain is Toxin BmKAEP from Olivierus martensii (Manchurian scorpion).